Reading from the N-terminus, the 303-residue chain is Ferrochelatase (303 aa).

Positions 185 and 262 each coordinate Fe cation.

The protein belongs to the ferrochelatase family.

The protein localises to the cytoplasm. The enzyme catalyses heme b + 2 H(+) = protoporphyrin IX + Fe(2+). It functions in the pathway porphyrin-containing compound metabolism; protoheme biosynthesis; protoheme from protoporphyrin-IX: step 1/1. Functionally, catalyzes the ferrous insertion into protoporphyrin IX. This is Ferrochelatase from Campylobacter jejuni subsp. jejuni serotype O:2 (strain ATCC 700819 / NCTC 11168).